A 391-amino-acid chain; its full sequence is Formate-dependent phosphoribosylglycinamide formyltransferase (391 aa).

N(1)-(5-phospho-beta-D-ribosyl)glycinamide-binding positions include 20 to 21 (EL) and glutamate 80. ATP is bound by residues arginine 112, lysine 153, 158-163 (SSGKGQ), 193-196 (EGFI), and glutamate 201. The region spanning 117–306 (RLAAETLGLP…EFALHVRAIQ (190 aa)) is the ATP-grasp domain. Mg(2+)-binding residues include glutamate 265 and glutamate 277. N(1)-(5-phospho-beta-D-ribosyl)glycinamide is bound by residues aspartate 284, lysine 354, and 361 to 362 (RR).

Belongs to the PurK/PurT family. Homodimer.

The enzyme catalyses N(1)-(5-phospho-beta-D-ribosyl)glycinamide + formate + ATP = N(2)-formyl-N(1)-(5-phospho-beta-D-ribosyl)glycinamide + ADP + phosphate + H(+). It participates in purine metabolism; IMP biosynthesis via de novo pathway; N(2)-formyl-N(1)-(5-phospho-D-ribosyl)glycinamide from N(1)-(5-phospho-D-ribosyl)glycinamide (formate route): step 1/1. Functionally, involved in the de novo purine biosynthesis. Catalyzes the transfer of formate to 5-phospho-ribosyl-glycinamide (GAR), producing 5-phospho-ribosyl-N-formylglycinamide (FGAR). Formate is provided by PurU via hydrolysis of 10-formyl-tetrahydrofolate. The polypeptide is Formate-dependent phosphoribosylglycinamide formyltransferase (Shewanella baltica (strain OS185)).